The following is a 546-amino-acid chain: Cyclic GMP-AMP synthase-like receptor (546 aa).

A compositionally biased stretch (polar residues) spans M1–V10. 2 disordered regions span residues M1–R116 and A134–N186. The segment covering Y35–Q45 has biased composition (basic and acidic residues). Residues T69–R80 show a composition bias toward low complexity. Basic and acidic residues-rich tracts occupy residues E82–K95 and K145–T174. Residues S175–N186 show a composition bias toward polar residues. Residues S243 and E255 to D257 each bind ATP. The Mg(2+) site is built by E255, D257, and D374. GTP is bound by residues D374 and R428–E435. ATP is bound by residues S432–E435, K455, and S470–K474.

It belongs to the mab-21 family. Mg(2+) is required as a cofactor. It depends on Mn(2+) as a cofactor.

It catalyses the reaction GTP + ATP = 2',3'-cGAMP + 2 diphosphate. The enzyme catalyses GTP + ATP = pppGp(2'-5')A + diphosphate. The catalysed reaction is pppGp(2'-5')A = 2',3'-cGAMP + diphosphate. In terms of biological role, nucleotidyltransferase that catalyzes the formation of cyclic GMP-AMP (2',3'-cGAMP) from ATP and GTP and plays a key role in innate immunity. Directly binds some unknown ligand, activating the nucleotidyltransferase activity, leading to synthesis of 2',3'-cGAMP, a second messenger that binds to and activates Sting, thereby triggering the immune response via activation of the NF-kappa-B transcription factor. This is Cyclic GMP-AMP synthase-like receptor from Exaiptasia diaphana (Tropical sea anemone).